The primary structure comprises 575 residues: FAD-linked oxidoreductase asqF (575 aa).

The first 23 residues, 1-23 (MALFRLSAAIVVIFLYIWSPSQR), serve as a signal peptide directing secretion. N-linked (GlcNAc...) asparagine glycans are attached at residues N45 and N80. Positions 118–306 (NQGRIPLYAA…VRVTMRTYPD (189 aa)) constitute an FAD-binding PCMH-type domain. H156 carries the post-translational modification Pros-8alpha-FAD histidine. N370 is a glycosylation site (N-linked (GlcNAc...) asparagine).

Belongs to the oxygen-dependent FAD-linked oxidoreductase family. FAD serves as cofactor.

It catalyses the reaction peniprequinolone + A = yaequinolone E + AH2. It participates in secondary metabolite biosynthesis. The protein operates within alkaloid biosynthesis. Its pathway is mycotoxin biosynthesis. Functionally, FAD-linked oxidoreductase; part of the gene cluster that mediates the biosynthesis of the aspoquinolone mycotoxins. Within the pathway, asqF performs FAD-dependent dehydrogenation of the dimethylallyl quinolone peniprequinolone to yield the conjugated aryl diene yaequinolone E. The first step of the pathway is catalyzed by the nonribosomal peptide synthetase asqK that condenses anthranilic acid and O-methyl-L-tyrosine to produce 4'-methoxycyclopeptin. 4'-methoxycyclopeptin is then converted to 4'-methoxydehydrocyclopeptin by the ketoglutarate-dependent dioxygenase asqJ. AsqJ also converts its first product 4'-methoxydehydrocyclopeptin to 4'-methoxycyclopenin. The following conversion of 4'-methoxycyclopenin into 4'-methoxyviridicatin is catalyzed by the cyclopenase asqI. 4'-methoxyviridicatin is the precursor of quinolone natural products, and is further converted to quinolinone B. The prenyltransferase asqH1 then catalyzes the canonical Friedel-Crafts alkylation of quinolinone B with dimethylallyl cation to yield dimethylallyl quinolone, which is subjected to FAD-dependent dehydrogenation by the FAD-linked oxidoreductase asqF to yield conjugated aryl diene. The delta(3') double bond then serves as the site of the second alkylation with DMAPP catalyzed by the prenyltransferase asqH2 to yield a carbenium ion intermediate, which can be attacked by H(2)O to yield a styrenyl quinolone containing a C3'-hydroxyprenyl chain. The FAD-dependent monooxygenase asqG performs epoxidation of the terminal C7'-C8' olefin. Finally, after dehydratation of the epoxide at C3 by asqC, the quinolone epoxide rearrangement protein asqO catalyzes an enzymatic 3-exo-tet cyclization to yield the cyclopropyl-THF ring system in aspoquinolone. This is FAD-linked oxidoreductase asqF from Emericella nidulans (strain FGSC A4 / ATCC 38163 / CBS 112.46 / NRRL 194 / M139) (Aspergillus nidulans).